Consider the following 317-residue polypeptide: MNKFKNIAVYGGGSFGTSLAALAAQNCSNVTLFLRDEEIAKEILHKKTNIKYLGGIKLPAHLHATTNLSVIKDFELIIIAVPSYAFDDSIKLLKTHGISEDNTLLIATKGFARNPTELFSDRLKTLLPHSSTAFFAGPNLAKELAKNLPASASIASLDIDIANKIANNISSKIFTTNMTSDIVTLQVAGALKNIFAIKSGIDLASEQGENARATLIVDALKEIITLSKVFGGLQKNSDILLEAGVVGDLVLTCYALGSRNTNFGYELGISSDKKKFLQEYKQLVEGREALKLVLDLIKQYDLHMPIISEVASYVMPA.

Residues serine 14, phenylalanine 15, arginine 35, and lysine 109 each contribute to the NADPH site. Positions 109 and 137 each coordinate sn-glycerol 3-phosphate. An NADPH-binding site is contributed by alanine 141. 5 residues coordinate sn-glycerol 3-phosphate: lysine 192, aspartate 248, serine 258, arginine 259, and asparagine 260. Catalysis depends on lysine 192, which acts as the Proton acceptor. Arginine 259 lines the NADPH pocket. Residues leucine 283 and glutamate 285 each coordinate NADPH.

Belongs to the NAD-dependent glycerol-3-phosphate dehydrogenase family.

Its subcellular location is the cytoplasm. It carries out the reaction sn-glycerol 3-phosphate + NAD(+) = dihydroxyacetone phosphate + NADH + H(+). The enzyme catalyses sn-glycerol 3-phosphate + NADP(+) = dihydroxyacetone phosphate + NADPH + H(+). Its pathway is membrane lipid metabolism; glycerophospholipid metabolism. Catalyzes the reduction of the glycolytic intermediate dihydroxyacetone phosphate (DHAP) to sn-glycerol 3-phosphate (G3P), the key precursor for phospholipid synthesis. The chain is Glycerol-3-phosphate dehydrogenase [NAD(P)+] from Rickettsia akari (strain Hartford).